A 525-amino-acid chain; its full sequence is Ribosomal protein S6 kinase beta-1 (525 aa).

The interval 1–54 is disordered; it reads MRRRRRRDGFYPAPDFRDREAEDMAGVFDIDLDQPEDAGSEDELEEGGQLNESM. Positions 28–32 match the TOS motif motif; that stretch reads FDIDL. Residues 30–46 are compositionally biased toward acidic residues; that stretch reads IDLDQPEDAGSEDELEE. The Protein kinase domain occupies 91–352; the sequence is FELLRVLGKG…AGEVQAHPFF (262 aa). ATP contacts are provided by residues 97–105 and Lys-123; that span reads LGKGGYGKV. Asp-218 serves as the catalytic Proton acceptor. Thr-252 carries the post-translational modification Phosphothreonine; by PDPK1. The AGC-kinase C-terminal domain occupies 353 to 423; that stretch reads RHINWEELLA…VAPSVLESVK (71 aa). The disordered stretch occupies residues 380–399; sequence SQFDSKFTRQTPVDSPDDST. Positions 381 to 399 are enriched in polar residues; it reads QFDSKFTRQTPVDSPDDST. Ser-394 is modified (phosphoserine). Thr-412 bears the Phosphothreonine; by MTOR, NEK6 and NEK7 mark. Residues 424-525 are autoinhibitory domain; sequence EKFSFEPKIR…KRPEHLRMNL (102 aa). A phosphoserine mark is found at Ser-434 and Ser-441. Phosphothreonine is present on Thr-444. Residues Ser-447 and Ser-452 each carry the phosphoserine modification. The tract at residues 486–509 is disordered; that stretch reads VTTSGEASAPLPIRQPNSGPYKKQ. Residue Lys-516 is modified to N6-acetyllysine.

Belongs to the protein kinase superfamily. AGC Ser/Thr protein kinase family. S6 kinase subfamily. Interacts with PPP1R9A/neurabin-1. Interacts with RPTOR. Interacts with IRS1. Interacts with EIF3B and EIF3C. Interacts with TRAF4. Interacts with POLDIP3. Interacts (via N-terminus) with IER5. In terms of processing, phosphorylation at Thr-412 is regulated by mTORC1. The phosphorylation at this site is maintained by an agonist-dependent autophosphorylation mechanism. Activated by phosphorylation at Thr-252 by PDPK1. Dephosphorylation by PPP1CC at Thr-412 in mitochondrion.

It localises to the cytoplasm. Its subcellular location is the synapse. The protein resides in the synaptosome. The protein localises to the mitochondrion outer membrane. It is found in the mitochondrion. The enzyme catalyses L-seryl-[protein] + ATP = O-phospho-L-seryl-[protein] + ADP + H(+). The catalysed reaction is L-threonyl-[protein] + ATP = O-phospho-L-threonyl-[protein] + ADP + H(+). Its activity is regulated as follows. Activation requires multiple phosphorylation events on serine/threonine residues. Activation appears to be first mediated by phosphorylation of multiple sites in the autoinhibitory domain, which facilitates phosphorylation at Thr-412, disrupting the autoinhibitory mechanism and allowing phosphorylation of Thr-252 by PDPK1. The active conformation of the kinase is believed to be stabilized by a mechanism involving three conserved phosphorylation sites located in the kinase domain activation loop (Thr-252) and in the AGC-kinase C-terminal domain (Ser-394 in the middle of the tail/linker region and Thr-412 within a hydrophobic motif at its end). Activated by mTORC1; isoform Alpha I and isoform Alpha II are sensitive to rapamycin, which inhibits activating phosphorylation at Thr-412. Activated by PDPK1. In terms of biological role, serine/threonine-protein kinase that acts downstream of mTOR signaling in response to growth factors and nutrients to promote cell proliferation, cell growth and cell cycle progression. Regulates protein synthesis through phosphorylation of EIF4B, RPS6 and EEF2K, and contributes to cell survival by repressing the pro-apoptotic function of BAD. Under conditions of nutrient depletion, the inactive form associates with the EIF3 translation initiation complex. Upon mitogenic stimulation, phosphorylation by the mechanistic target of rapamycin complex 1 (mTORC1) leads to dissociation from the EIF3 complex and activation. The active form then phosphorylates and activates several substrates in the pre-initiation complex, including the EIF2B complex and the cap-binding complex component EIF4B. Also controls translation initiation by phosphorylating a negative regulator of EIF4A, PDCD4, targeting it for ubiquitination and subsequent proteolysis. Promotes initiation of the pioneer round of protein synthesis by phosphorylating POLDIP3/SKAR. In response to IGF1, activates translation elongation by phosphorylating EEF2 kinase (EEF2K), which leads to its inhibition and thus activation of EEF2. Also plays a role in feedback regulation of mTORC2 by mTORC1 by phosphorylating MAPKAP1/SIN1, MTOR and RICTOR, resulting in the inhibition of mTORC2 and AKT1 signaling. Also involved in feedback regulation of mTORC1 and mTORC2 by phosphorylating DEPTOR. Mediates cell survival by phosphorylating the pro-apoptotic protein BAD and suppressing its pro-apoptotic function. Phosphorylates mitochondrial URI1 leading to dissociation of a URI1-PPP1CC complex. The free mitochondrial PPP1CC can then dephosphorylate RPS6KB1 at Thr-412, which is proposed to be a negative feedback mechanism for the RPS6KB1 anti-apoptotic function. Mediates TNF-alpha-induced insulin resistance by phosphorylating IRS1 at multiple serine residues, resulting in accelerated degradation of IRS1. In cells lacking functional TSC1-2 complex, constitutively phosphorylates and inhibits GSK3B. May be involved in cytoskeletal rearrangement through binding to neurabin. Phosphorylates and activates the pyrimidine biosynthesis enzyme CAD, downstream of MTOR. Following activation by mTORC1, phosphorylates EPRS and thereby plays a key role in fatty acid uptake by adipocytes and also most probably in interferon-gamma-induced translation inhibition. The polypeptide is Ribosomal protein S6 kinase beta-1 (RPS6KB1) (Oryctolagus cuniculus (Rabbit)).